Reading from the N-terminus, the 94-residue chain is CRISPR-associated endoribonuclease Cas2 (94 aa).

Position 10 (Asp-10) interacts with Mg(2+).

Belongs to the CRISPR-associated endoribonuclease Cas2 protein family. As to quaternary structure, homodimer, forms a heterotetramer with a Cas1 homodimer. Mg(2+) serves as cofactor.

Functionally, CRISPR (clustered regularly interspaced short palindromic repeat), is an adaptive immune system that provides protection against mobile genetic elements (viruses, transposable elements and conjugative plasmids). CRISPR clusters contain sequences complementary to antecedent mobile elements and target invading nucleic acids. CRISPR clusters are transcribed and processed into CRISPR RNA (crRNA). Functions as a ssRNA-specific endoribonuclease. Involved in the integration of spacer DNA into the CRISPR cassette. The sequence is that of CRISPR-associated endoribonuclease Cas2 from Leptospira interrogans serogroup Icterohaemorrhagiae serovar Lai (strain 56601).